Here is a 327-residue protein sequence, read N- to C-terminus: 4-diphosphocytidyl-2-C-methyl-D-erythritol kinase (327 aa).

Lys-14 is an active-site residue. 97-107 (PDGAGLGGGSA) serves as a coordination point for ATP. Asp-140 is a catalytic residue.

Belongs to the GHMP kinase family. IspE subfamily.

It catalyses the reaction 4-CDP-2-C-methyl-D-erythritol + ATP = 4-CDP-2-C-methyl-D-erythritol 2-phosphate + ADP + H(+). It functions in the pathway isoprenoid biosynthesis; isopentenyl diphosphate biosynthesis via DXP pathway; isopentenyl diphosphate from 1-deoxy-D-xylulose 5-phosphate: step 3/6. Its function is as follows. Catalyzes the phosphorylation of the position 2 hydroxy group of 4-diphosphocytidyl-2C-methyl-D-erythritol. This Oleidesulfovibrio alaskensis (strain ATCC BAA-1058 / DSM 17464 / G20) (Desulfovibrio alaskensis) protein is 4-diphosphocytidyl-2-C-methyl-D-erythritol kinase.